An 828-amino-acid polypeptide reads, in one-letter code: Periplasmic nitrate reductase (828 aa).

The segment at residues 1 to 31 is a signal peptide (tat-type signal); it reads MKLSRRSFMKANAVAAAAAAAGLSVPGVARA. The 57-residue stretch at 39–95 folds into the 4Fe-4S Mo/W bis-MGD-type domain; that stretch reads IKWDKAPCRFCGTGCGVLVGTQQGRVVACQGDPDAPVNRGLNCIKGYFLPKIMYGKD. The [4Fe-4S] cluster site is built by cysteine 46, cysteine 49, cysteine 53, and cysteine 81. Mo-bis(molybdopterin guanine dinucleotide)-binding positions include lysine 83, glutamine 150, asparagine 175, cysteine 179, 212-219, 243-247, 262-264, methionine 372, glutamine 376, asparagine 482, 508-509, lysine 531, aspartate 558, and 718-727; these read WGSNMAEM, STFQH, QSD, SD, and TGRVLEHWHT. Phenylalanine 794 serves as a coordination point for substrate. Mo-bis(molybdopterin guanine dinucleotide) is bound by residues asparagine 802 and lysine 819.

Belongs to the prokaryotic molybdopterin-containing oxidoreductase family. NasA/NapA/NarB subfamily. As to quaternary structure, component of the periplasmic nitrate reductase NapAB complex composed of NapA and NapB. [4Fe-4S] cluster is required as a cofactor. Requires Mo-bis(molybdopterin guanine dinucleotide) as cofactor. In terms of processing, predicted to be exported by the Tat system. The position of the signal peptide cleavage has not been experimentally proven.

Its subcellular location is the periplasm. The enzyme catalyses 2 Fe(II)-[cytochrome] + nitrate + 2 H(+) = 2 Fe(III)-[cytochrome] + nitrite + H2O. Functionally, catalytic subunit of the periplasmic nitrate reductase complex NapAB. Receives electrons from NapB and catalyzes the reduction of nitrate to nitrite. This Salmonella dublin (strain CT_02021853) protein is Periplasmic nitrate reductase.